Reading from the N-terminus, the 355-residue chain is Proto-oncogene Wnt-3 (355 aa).

Residues 1-21 (MEPHLLGLLLGLLLSGTRVLA) form the signal peptide. Intrachain disulfides connect Cys-80-Cys-91, Cys-131-Cys-139, Cys-141-Cys-158, Cys-206-Cys-220, Cys-208-Cys-215, Cys-284-Cys-315, Cys-300-Cys-310, Cys-314-Cys-354, Cys-330-Cys-345, Cys-332-Cys-342, and Cys-337-Cys-338. N-linked (GlcNAc...) asparagine glycosylation occurs at Asn-90. Ser-212 carries O-palmitoleoyl serine; by PORCN lipidation. Asn-301 carries an N-linked (GlcNAc...) asparagine glycan.

It belongs to the Wnt family. In terms of assembly, forms a soluble 1:1 complex with AFM; this prevents oligomerization and is required for prolonged biological activity. The complex with AFM may represent the physiological form in body fluids. Interacts with PORCN. Interacts with WLS. Post-translationally, palmitoleoylation is required for efficient binding to frizzled receptors. Depalmitoleoylation leads to Wnt signaling pathway inhibition. As to expression, detected at low levels in adult brain. Dorsal portion of the neural tube, dorsal ectoderm, the branchial arches, and the limb buds.

It localises to the secreted. The protein localises to the extracellular space. It is found in the extracellular matrix. Functionally, ligand for members of the frizzled family of seven transmembrane receptors. Functions in the canonical Wnt signaling pathway that results in activation of transcription factors of the TCF/LEF family. Required for normal gastrulation, formation of the primitive streak, and for the formation of the mesoderm during early embryogenesis. Required for normal formation of the apical ectodermal ridge and for normal embryonic limb development. The chain is Proto-oncogene Wnt-3 (Wnt3) from Mus musculus (Mouse).